We begin with the raw amino-acid sequence, 156 residues long: Ribosomal RNA large subunit methyltransferase H (156 aa).

S-adenosyl-L-methionine-binding positions include L73, G104, and 123–128 (LSDLTL).

The protein belongs to the RNA methyltransferase RlmH family. Homodimer.

Its subcellular location is the cytoplasm. The enzyme catalyses pseudouridine(1915) in 23S rRNA + S-adenosyl-L-methionine = N(3)-methylpseudouridine(1915) in 23S rRNA + S-adenosyl-L-homocysteine + H(+). Specifically methylates the pseudouridine at position 1915 (m3Psi1915) in 23S rRNA. This chain is Ribosomal RNA large subunit methyltransferase H, found in Methylibium petroleiphilum (strain ATCC BAA-1232 / LMG 22953 / PM1).